Reading from the N-terminus, the 352-residue chain is tRNA N6-adenosine threonylcarbamoyltransferase (352 aa).

2 residues coordinate Fe cation: H115 and H119. Residues 137–141 (LVSGG), D170, G183, and N281 contribute to the substrate site. D309 contacts Fe cation.

This sequence belongs to the KAE1 / TsaD family. The cofactor is Fe(2+).

The protein resides in the cytoplasm. It carries out the reaction L-threonylcarbamoyladenylate + adenosine(37) in tRNA = N(6)-L-threonylcarbamoyladenosine(37) in tRNA + AMP + H(+). Required for the formation of a threonylcarbamoyl group on adenosine at position 37 (t(6)A37) in tRNAs that read codons beginning with adenine. Is involved in the transfer of the threonylcarbamoyl moiety of threonylcarbamoyl-AMP (TC-AMP) to the N6 group of A37, together with TsaE and TsaB. TsaD likely plays a direct catalytic role in this reaction. This Methylocapsa acidiphila protein is tRNA N6-adenosine threonylcarbamoyltransferase.